The sequence spans 406 residues: Lissencephaly-1 homolog (406 aa).

One can recognise a LisH domain in the interval 7–39; that stretch reads QREELNKAIADYLRSNGYESALEAFQKEAEMPG. A coiled-coil region spans residues 54–81; it reads TSVIRLQKKVMDLEAKLAEAEKEFQSGG. Residues 74 to 89 show a composition bias toward basic and acidic residues; the sequence is EKEFQSGGPNKKERSP. The segment at 74–99 is disordered; the sequence is EKEFQSGGPNKKERSPSEWIPRPPAR. WD repeat units follow at residues 104 to 145, 146 to 185, 188 to 227, 230 to 269, 272 to 329, 332 to 371, and 374 to 406; these read GHRS…RTLK, GHTD…NIKT, GHDH…CVKT, GHRE…CKAE, EHEH…CIMT, GHDN…CQKT, and AHQH…WECR.

Belongs to the WD repeat LIS1/nudF family.

The protein resides in the cytoplasm. The protein localises to the cytoskeleton. Its subcellular location is the microtubule organizing center. It is found in the centrosome. Functionally, positively regulates the activity of the minus-end directed microtubule motor protein dynein. May enhance dynein-mediated microtubule sliding by targeting dynein to the microtubule plus end. Required for several dynein- and microtubule-dependent processes. The chain is Lissencephaly-1 homolog from Branchiostoma floridae (Florida lancelet).